The following is a 4114-amino-acid chain: MSVSKNAHAPFPDVTGLRTSGPDFSRVGPQCKLLRVQQSLHLDARAASSFSGQDLHLALLSAWCVILFHYGSHEATNIEVLHTSQHGHETLVELDFAEQRELVPFTPSQLAAFVHQARQQQLPAKDLDHGYAAFYQPSHTNEPSPHFQQLQLSSRPDISLALSYHLQGSAQLVLEMKAAPSVHSHQSAQLQLRQVAALLESYHSDTQQHALSVERFDWKLRASDNPNYQHLPDPNHIQDRHADRLETEFEYFAATTPDALALDFRFDLQDLKSTKWSYAEMNQRAEKVKHLLWSHGVGSASSDPQADHIVALYLEKSPETYLSFIGVLKAGAAWCPIDTDWPASRRQALLAKSNAKIVLTHDDKISEQLRHDLESQLVKDKGEITAIRLDQLDAELSQVQVVPPANANRSIQQLAYMIWTSGTTGLPKGVGIQHLAIIQAMRALRIYIPYGKDKIGTDQIRYLQYSAYNFDLSIMDCFYTWGLGGTICSCPRGVLLQDLVEVGNSLQPTHTLLTPAVMAMTERHRVPSLKVVISGGEKLSQVVADEWSKDCCLLNLYGPAEATLIAMNRRVPFGDRVKAPNIGVALPTVSCHALDKYDQIVIKGAVGELVLGGPQLARGYVGDPVKTADKFFPHPQLGRVYRTGDLVRQLDNQEFEYLGRIDDQVKINGIRIELLEINAAIKNSHDKIKDSETMAFSKKDNESEQQIINFSALPGGEPGQLLRTDQDAIAVARELQANAKDSLPSYMVPNLFVILSHFPRTSSAKIDRVALKNVLASFDQLDWENKLANEGDDDQVDPATAQAEACLRKWLAKLCNVDASKIGRKTPFTSVGLDSIRAMMFSKRVSEEGFAVSVLDVARFPTLKSLGEHLQSSGASSEERAKRAASFLADFDAAFRPVVSSWVKQRKADASAIQSILPCTPLQEGMLAESQRDSSSYRIQRQYRLASDCDQARLSKALIETVAHFDSLRTSFADVGSLDVGLHQREWPFQPHFLQIVWKSFTPLIEQLDVDDGSDAEQAILSAAKTKLDLDPFGTSPPVAFLFVKQALSRSLVVVAHHSTYDARSLGIFEDHVEAVYNRQKPPTSLQFSTALAQILPIDQTEAQRHADVWQKALSNYPRGEYASFPTLSLTRPSEADADQASLHQSRYLEANINWAKIESACRELGVSARPLVQTAWALVLSAFTESQHLILGDSVSGRTLSAELDLAYGPVLSTVPVPFMLRPEQKLGNLIKQMDDFQTSIMEAQHTDLGAIRRMLQVPPRESLFHSVFVLEPAPEQPEDIDSSQFRLSKMADLGVATEHVLGVEVLPASDGSVKLGLSWQKNIISEGFGGLILEQFDRSLTALCSSLDADVGSLLYCHPRSDQQASSFYSVTKPVSKQKCSSATFTGVASSLNKQAISDNSNAVEIYQDMADSPSSRKPAATMSYPELEQASNGVANLFRHLPRNSVVGVCLERGLESYIVPLAILKAGHAYLPLDATLPLDRKKELVKDSGAALIVASSKFTDFDSLTGVEMLGTDSRQFKDAVKDGKATVSVESRSDDVAFIIYTSGSTGKPKGCLLTQANLAAAVEGFYYNYEKEAPGSFESRARFLARSAEAFDVHLLEIFLSLRVGATIVTGPRALIHDDIAKTMSTLEVTHACVVPSLFFSKGKRIEPSVVPSLRVLIIGGEALTQDLCQIWGSEGSERPVVLNAYGPSEATIGNSVARVSKKSRPSNIGAPFPGTQYLVLKDVNGQLVPTLRGEPGELYIGGEQVAKGYLNRPDSSSFITYQGQQIYRTGDMVRLHPSDEAEYLGRIDGSQVKVRGARLELAEVDAALSASLNENLGTVGTAVTIHADHPKIEGAARLVSFFAQDCVRTKAQDSVDPGALLVQAPEAVKQSAELRRSVRARLPQYMVPSLVLALTYLPISPLSGKADRRLLKELYHSIDPSKLSTLSDKNESRQRELTDSEQTVAELVRSSVRLSSDVHLMHDLDLIMAGLDSLTVVTLANKLRKHGYDATVSSIMNEPTIEAIAGRRIDKLSSNETSDVEWKQTVSQLTDKVRSLPQYRGTQIETALPCVPIQVALVSQAVSDDRSTPRYITTISIDLSSNEFSADRIRNAWMTALSRHEIYRTVFAEVDRTLVQVVLSAESLTSNWSATSEPIPSPDSLADYHASTAKDIVANISSVPALRLKLWQGENGAPTLTLTCSHAIYDGDSIRMLLKEASDCLVTKSKVVPALPFQEAARCIVGDAEDEEAKQFWTTTLADFLPTTVPNLTGVRPEHNVSRGEELTIASHLSFTQLEKAARAAKVTIQSILVAAFAHLLGLYAGESDVTLGLVLSGRSIPVDGVESIHGPCVTTVPLRLTDARSNASSDLCKRAHQAVNAILPHQHVSLPQLMRWLDLSKAPFEALFSYLGQSERSSEKPYFSERASQMERDYSLALEVSAVGDAVNLHLAFDTRSMPAEQAKRMLCQYDGFLTVFTGTKRVDDDGKHLSILNKSCYVPTSANETIVARFTEHVKANPDAPAIVFASSMQEPPKVTSYAELDSLSTKIAFHLVHAAGPFVGVHLNKEGPELYATILAIWKAGKAYLPLDPSLPVERLSYMIESVGDCPVVASHSTKENLASFRCKVLDLKELVKPRSGAHELPSQNLDALCYLLFTSGSTGKPKAVQINQRALAGALYSWERILPFTRTSRFLQLASIGFDVCLIEMCMPLSLGFSIGTAPKQELLEDLTHSIKHLGITIADLPAALAGAVHPEDVRLEWLMSGGDVIDSRVVDEWNHAKRLLINAWGPTEATIGNTLGQVKRGATRNLIGGVYPSSSMFVLDENSTRILPSGAIGELAVGGPQLADCYYGREELTAEKFILLEDGTRVYRTGDLGRFLVDDTVECLGRIGSDRQVKVNGQRMELDEVCSVISAQAGVYDADVQYLKHPSMGSKQLVAFVAAAETQAKQGDMDVRDDDKAIDLCIRLEQEAAKRLATYMVPTHWIVMKHGLPLTHNNKTDHKALAAFYGRMDATLLRSLGAKREGAISSHAWTQSELKLRALVSDFCNVPQDQLARNTSFHRLGIDSISAIRLVKQLRTSGFTFSVADVLSTPNIAALADKQMQSSACSSDHAQPNEGLNEWIGQISSVAENEAWKWSSKDSLVSVLPCTPLQSGMIAQSLASAGGLYFHHHAFELQSTEKQHVVAAWRKLVERLDILRTTFHPVDGLHPWTQAVHSEVQPRIVQHSGSFQSCGLDAIDGQPSFQDEQAFRTPPFALHLWSQEGKLVVLISIHHALYDGSSLPQLLEDFEALITGNQAKLTSRLPFYKLVPSLLSQDEDVQHWVNALHAFQPTLLCKRSNKPSGAAVLLEKRLALTSQELESRCRAIGVSPQVLCNLTFGKLLAIESQTRDVCFGQLFGLLDLMPEADTCVGPAFNTTATRIRFQELDAPVSKLATTLQQANDAGRPHRRAALRDVQAKLGRGQLFDALFDYQRSYDQEDSKLRQIELQSDGTERAQYTLNVAFVQGPSQMSIVAKADGNRYDQKALEGVVYRLEHLLEHLSIRVEEPISVLPDVFGETAFPLHLAQVSVANGTSTSKASAQNSANQALSQDGSKLASIISQIAGIDEMELHGETRLSQLGLDSISAIRIASQARKAGLNLRMGEIVAGETINAILSARSQTNATKSSDHVNRNGRGNGHARVSLETAKRVAARLAIDFEQVERVLPVLPGQKLWLATWAQSQGGGGFSFAYRLAGAEADKVKETWQKLRQLQPILRTAFLVHHDGGASQVVLKADSVSAGSGFAEVQVERDAELTAKDVVGRRAAQGWPDLTSPPVELTLVGEIVVFSLHHVLYDAFSIEFLARDFGSLYNAGELVSSNQWPEVVEHIVEEQQRTRGDAQEYWCRALAPGSSGLLADRPGSTGEAWHVQHNAISLSSAVDVRIRKAGLTLAGVLLAAWSTLLSERMHDASPVFGLYQLGRSSSFESIDKVHGPLLNCLPIQLRGGSLLDKARAAVSELRLRAKFEQTDLQDAHRWAGLSQHQACYNTFVNILFGDQLDQHLEMHQLDLGHPLDYSHHSQHSTHDRTPPSTPHVALPWQPDVNLDVVLKNHAVDIAIKANTSVVAQADLHTLVNRLVQLVHATLELL.

Carrier domains lie at 797–874 (DPAT…QSSG), 1947–2021 (TDSE…IDKL), 3020–3093 (TQSE…MQSS), and 3574–3650 (QALS…SQTN). Ser-835, Ser-1982, Ser-3054, and Ser-3611 each carry O-(pantetheine 4'-phosphoryl)serine. The segment at 4040 to 4061 (LDYSHHSQHSTHDRTPPSTPHV) is disordered. Positions 4041-4054 (DYSHHSQHSTHDRT) are enriched in basic and acidic residues.

This sequence belongs to the ATP-dependent AMP-binding enzyme family. Requires pantetheine 4'-phosphate as cofactor.

The protein operates within siderophore biosynthesis; ferrichrome biosynthesis. In terms of biological role, multidomain peptide synthetase involved in ferrichrome biosynthesis. This Mycosarcoma maydis (Corn smut fungus) protein is Ferrichrome siderophore peptide synthetase (SID2).